The primary structure comprises 109 residues: MTVAKSVALFAVAALFEIGGAWLVWQGVREHRGWIWIGAGVAALGAYGFVATLQPDAHFGRILAAYGGVFVAGSLIWGMVADGFRPDRWDVSGALICLLGMAVIMYAPR.

The next 4 helical transmembrane spans lie at 7 to 27 (VALF…VWQG), 33 to 53 (GWIW…VATL), 62 to 82 (ILAA…MVAD), and 88 to 108 (RWDV…MYAP).

The protein belongs to the UPF0060 family.

Its subcellular location is the cell membrane. The polypeptide is UPF0060 membrane protein RHA1_ro06609 (Rhodococcus jostii (strain RHA1)).